Here is an 807-residue protein sequence, read N- to C-terminus: 85/88 kDa calcium-independent phospholipase A2 (807 aa).

Phosphoserine is present on serine 13. ANK repeat units follow at residues 120 to 147 (WTVTHLAVELGIRECFHHSRIISCANST), 151 to 181 (EGCTPLHLACRKGDSEILVELVQYCHAQMDV), 185 to 215 (KGETAFHYAVQGDNPQVLQLLGKNASAGLNQ), 219 to 248 (QGLTPLHLACKMGKQEMVRVLLLCNARCNI), 251 to 281 (PGGFPIHTAMKFSQKGCAEMIISMDSNQIHS), 286 to 312 (YGASPLHWAKNAEMARMLLKRGCDVDS), 316 to 345 (SGNTALHVAVMRNRFDCVMVLLTYGANAGA), 349 to 378 (HGNTPLHLAMSKDNMEMVKALIVFGAEVDT), and 382 to 403 (FGETPALIASKISKLITRKALL). A run of 2 helical transmembrane segments spans residues 481 to 501 (LLCLDGGGVKGLVIIQLLIAI) and 512 to 532 (LFDWVAGTSTGGILALAILHS). Residues 482–666 (LCLDGGGVKG…LANNPTLDAM (185 aa)) form the PNPLA domain. A GXGXXG motif is present at residues 486 to 491 (GGGVKG). A GXSXG motif is present at residues 518–522 (GTSTG). Catalysis depends on serine 520, which acts as the Nucleophile. Aspartate 653 functions as the Proton acceptor in the catalytic mechanism. The short motif at 653–655 (DGG) is the DGA/G element. Residues 678–687 (RKGQGNKVKK) form a calmodulin-binding (1-9-14 motif) region. The calmodulin-binding (IQ motif) stretch occupies residues 749–760 (AWCEMVGIQYFR).

In terms of assembly, homodimer formed by catalytic domains tightly interacting through a large hydrophobic interface. The contact area involves 3 alpha helices, several loops and a part of the beta sheet from each monomer. Both active sites of the dimer are in close proximity adopting an open conformation that provide sufficient space for phospholipid access and favoring cooperativity in deacylation-reacylation reactions. Each monomer has 9 ankyrin repeats stacked side-by-side in an elongated structure oriented outwards from the catalytic core. In terms of tissue distribution, expressed in neurons of central and peripheral nervous system. Highly expressed in Purkinje cells in cerebellum and dorsal and ventral horn neurons in the spinal cord. Expressed in testis (at protein level). Expressed in skeletal muscle (at protein level).

It localises to the cytoplasm. The protein localises to the cell membrane. It is found in the mitochondrion. Its subcellular location is the cell projection. The protein resides in the pseudopodium. It carries out the reaction a 1,2-diacyl-sn-glycero-3-phosphocholine + H2O = a 1-acyl-sn-glycero-3-phosphocholine + a fatty acid + H(+). The catalysed reaction is a 1-O-alkyl-2-acyl-sn-glycero-3-phosphocholine + H2O = a 1-O-alkyl-sn-glycero-3-phosphocholine + a fatty acid + H(+). It catalyses the reaction 1,2-dihexadecanoyl-sn-glycero-3-phosphocholine + H2O = 1-hexadecanoyl-sn-glycero-3-phosphocholine + hexadecanoate + H(+). The enzyme catalyses 1-hexadecanoyl-2-(9Z-octadecenoyl)-sn-glycero-3-phosphocholine + H2O = 1-hexadecanoyl-sn-glycero-3-phosphocholine + (9Z)-octadecenoate + H(+). It carries out the reaction 1-hexadecanoyl-2-(9Z,12Z-octadecadienoyl)-sn-glycero-3-phosphocholine + H2O = (9Z,12Z)-octadecadienoate + 1-hexadecanoyl-sn-glycero-3-phosphocholine + H(+). The catalysed reaction is 1-hexadecanoyl-2-(5Z,8Z,11Z,14Z-eicosatetraenoyl)-sn-glycero-3-phosphocholine + H2O = 1-hexadecanoyl-sn-glycero-3-phosphocholine + (5Z,8Z,11Z,14Z)-eicosatetraenoate + H(+). It catalyses the reaction 1-octadecanoyl-2-(5Z,8Z,11Z,14Z-eicosatetraenoyl)-sn-glycero-3-phosphocholine + H2O = 1-octadecanoyl-sn-glycero-3-phosphocholine + (5Z,8Z,11Z,14Z)-eicosatetraenoate + H(+). The enzyme catalyses 1-hexadecanoyl-2-(5Z,8Z,11Z,14Z-eicosatetraenoyl)-sn-glycero-3-phosphoethanolamine + H2O = 1-hexadecanoyl-sn-glycero-3-phosphoethanolamine + (5Z,8Z,11Z,14Z)-eicosatetraenoate + H(+). It carries out the reaction 1,2-dihexadecanoyl-sn-glycero-3-phosphate + H2O = 1-hexadecanoyl-sn-glycero-3-phosphate + hexadecanoate + H(+). The catalysed reaction is a 1-acyl-sn-glycero-3-phosphocholine + H2O = sn-glycerol 3-phosphocholine + a fatty acid + H(+). It catalyses the reaction 1-hexadecanoyl-sn-glycero-3-phosphocholine + H2O = sn-glycerol 3-phosphocholine + hexadecanoate + H(+). The enzyme catalyses 1-(5Z,8Z,11Z,14Z-eicosatetraenoyl)-sn-glycero-3-phosphocholine + H2O = sn-glycerol 3-phosphocholine + (5Z,8Z,11Z,14Z)-eicosatetraenoate + H(+). It carries out the reaction 2-(5Z,8Z,11Z,14Z)-eicosatetraenoyl-sn-glycero-3-phosphocholine + H2O = sn-glycerol 3-phosphocholine + (5Z,8Z,11Z,14Z)-eicosatetraenoate + H(+). The catalysed reaction is 1-O-hexadecyl-2-(5Z,8Z,11Z,14Z)-eicosatetraenoyl-sn-glycero-3-phosphocholine + H2O = 1-O-hexadecyl-sn-glycero-3-phosphocholine + (5Z,8Z,11Z,14Z)-eicosatetraenoate + H(+). It catalyses the reaction 1-O-hexadecyl-2-acetyl-sn-glycero-3-phosphocholine + H2O = 1-O-hexadecyl-sn-glycero-3-phosphocholine + acetate + H(+). The enzyme catalyses hexadecanoyl-CoA + H2O = hexadecanoate + CoA + H(+). It carries out the reaction 1',3'-bis[1,2-di-(9Z-octadecenoyl)-sn-glycero-3-phospho]-glycerol + H2O = 1'-[1,2-di-(9Z-octadecenoyl)-sn-glycero-3-phospho]-3'-[1-(9Z-octadecenoyl)-sn-glycero-3-phospho]-glycerol + (9Z)-octadecenoate + H(+). The catalysed reaction is 1'-[1,2-di-(9Z-octadecenoyl)-sn-glycero-3-phospho]-3'-[1-(9Z-octadecenoyl)-sn-glycero-3-phospho]-glycerol + H2O = 1',3'-bis-[1-(9Z-octadecenoyl)-sn-glycero-3-phospho]-glycerol + (9Z)-octadecenoate + H(+). It catalyses the reaction 1',3'-bis-[1,2-di-(9Z,12Z-octadecadienoyl)-sn-glycero-3-phospho]-glycerol + H2O = 1'-[1,2-di-(9Z,12Z-octadecadienoyl)-sn-glycero-3-phospho]-3'-[1-(9Z,12Z-octadecadienoyl)-sn-glycero-3-phospho]-glycerol + (9Z,12Z)-octadecadienoate + H(+). The enzyme catalyses 1-octadecanoyl-2-(15-hydroxy-(5Z,8Z,11Z,13E)-eicosatetraenoyl)-sn-glycero-3-phosphoethanolamine + H2O = 1-octadecanoyl-sn-glycero-3-phosphoethanolamine + 15-hydroxy-(5Z,8Z,11Z,13E)-eicosatetraenoate + H(+). Inhibited by calcium-activated calmodulin. Activated by ATP. Inhibited by bromoenol lactone (BEL). In terms of biological role, calcium-independent phospholipase involved in phospholipid remodeling with implications in cellular membrane homeostasis, mitochondrial integrity and signal transduction. Hydrolyzes the ester bond of the fatty acyl group attached at sn-1 or sn-2 position of phospholipids (phospholipase A1 and A2 activity respectively), producing lysophospholipids that are used in deacylation-reacylation cycles. Hydrolyzes both saturated and unsaturated long fatty acyl chains in various glycerophospholipid classes such as phosphatidylcholines, phosphatidylethanolamines and phosphatidates, with a preference for hydrolysis at sn-2 position. Can further hydrolyze lysophospholipids carrying saturated fatty acyl chains (lysophospholipase activity). Upon oxidative stress, contributes to remodeling of mitochondrial phospholipids in pancreatic beta cells, in a repair mechanism to reduce oxidized lipid content. Preferentially hydrolyzes oxidized polyunsaturated fatty acyl chains from cardiolipins, yielding monolysocardiolipins that can be reacylated with unoxidized fatty acyls to regenerate native cardiolipin species. Hydrolyzes oxidized glycerophosphoethanolamines present in pancreatic islets, releasing oxidized polyunsaturated fatty acids such as hydroxyeicosatetraenoates (HETEs). Has thioesterase activity toward fatty-acyl CoA releasing CoA-SH known to facilitate fatty acid transport and beta-oxidation in mitochondria particularly in skeletal muscle. Plays a role in regulation of membrane dynamics and homeostasis. Selectively hydrolyzes sn-2 arachidonoyl group in plasmalogen phospholipids, structural components of lipid rafts and myelin. Regulates F-actin polymerization at the pseudopods, which is required for both speed and directionality of MCP1/CCL2-induced monocyte chemotaxis. Targets membrane phospholipids to produce potent lipid signaling messengers. Generates lysophosphatidate (LPA, 1-acyl-glycerol-3-phosphate), which acts via G-protein receptors in various cell types. Has phospholipase A2 activity toward platelet-activating factor (PAF, 1-O-alkyl-2-acetyl-sn-glycero-3-phosphocholine), likely playing a role in inactivation of this potent pro-inflammatory signaling lipid. In response to glucose, amplifies calcium influx in pancreatic beta cells to promote INS secretion. This Mus musculus (Mouse) protein is 85/88 kDa calcium-independent phospholipase A2 (Pla2g6).